An 87-amino-acid chain; its full sequence is Small ribosomal subunit protein uS17 (87 aa).

The protein belongs to the universal ribosomal protein uS17 family. Part of the 30S ribosomal subunit.

In terms of biological role, one of the primary rRNA binding proteins, it binds specifically to the 5'-end of 16S ribosomal RNA. This Alcanivorax borkumensis (strain ATCC 700651 / DSM 11573 / NCIMB 13689 / SK2) protein is Small ribosomal subunit protein uS17.